The primary structure comprises 262 residues: Proline-rich protein 23C (262 aa).

Disordered stretches follow at residues 1–52 and 225–262; these read MGSR…AGTP and VPSS…LFQE. A compositionally biased stretch (pro residues) spans 226-242; it reads PSSPLQPLPPSPSPGPH. The span at 243–252 shows a compositional bias: basic and acidic residues; it reads ARPELPERPP. Basic residues predominate over residues 253–262; sequence CKVRRRLFQE.

The protein belongs to the PRR23 family.

The chain is Proline-rich protein 23C (PRR23C) from Homo sapiens (Human).